Reading from the N-terminus, the 198-residue chain is Adenylate kinase (198 aa).

Position 10–15 (10–15) interacts with ATP; that stretch reads GAGKGT. An NMP region spans residues 30 to 59; sequence STGDMLRAAVQAGSEVGKRAKAVMDAGELV. AMP-binding positions include Thr31, Arg36, 57-59, 85-88, and Gln92; these read ELV and GYPR. Residues 126-142 form an LID region; sequence KRAEDAKAAGQPVRKDD. Position 127 (Arg127) interacts with ATP. AMP contacts are provided by Arg139 and Arg150. Position 178 (Ala178) interacts with ATP.

It belongs to the adenylate kinase family. As to quaternary structure, monomer.

Its subcellular location is the cytoplasm. The enzyme catalyses AMP + ATP = 2 ADP. It participates in purine metabolism; AMP biosynthesis via salvage pathway; AMP from ADP: step 1/1. In terms of biological role, catalyzes the reversible transfer of the terminal phosphate group between ATP and AMP. Plays an important role in cellular energy homeostasis and in adenine nucleotide metabolism. The protein is Adenylate kinase of Mesorhizobium japonicum (strain LMG 29417 / CECT 9101 / MAFF 303099) (Mesorhizobium loti (strain MAFF 303099)).